The following is a 357-amino-acid chain: ATP-dependent 6-phosphofructokinase (357 aa).

ATP-binding positions include G12, 80-81 (KG), and 107-110 (GDGS). D108 is a Mg(2+) binding site. Residues 131-133 (TID), R168, 175-177 (MGR), E229, R272, and 278-281 (HIQR) each bind substrate. D133 acts as the Proton acceptor in catalysis.

This sequence belongs to the phosphofructokinase type A (PFKA) family. Mixed-substrate PFK group III subfamily. Homodimer or homotetramer. Mg(2+) is required as a cofactor.

It localises to the cytoplasm. It carries out the reaction beta-D-fructose 6-phosphate + ATP = beta-D-fructose 1,6-bisphosphate + ADP + H(+). Its pathway is carbohydrate degradation; glycolysis; D-glyceraldehyde 3-phosphate and glycerone phosphate from D-glucose: step 3/4. Subject to allosteric activation by ADP and other diphosphonucleosides, and inhibition by phosphoenolpyruvate. In terms of biological role, catalyzes the phosphorylation of D-fructose 6-phosphate to fructose 1,6-bisphosphate by ATP, the first committing step of glycolysis. In Trichormus variabilis (strain ATCC 29413 / PCC 7937) (Anabaena variabilis), this protein is ATP-dependent 6-phosphofructokinase.